Here is a 105-residue protein sequence, read N- to C-terminus: MANRIKKGDQVVINTGKDKGKQGEVVRVDGDRVIVSNANVIKRHTKPNPQAGVAGGVVEREASIHISNVNIVNPATGKGERVGFKVLEDGRKLRVFRSSGEALDA.

It belongs to the universal ribosomal protein uL24 family. Part of the 50S ribosomal subunit.

Functionally, one of two assembly initiator proteins, it binds directly to the 5'-end of the 23S rRNA, where it nucleates assembly of the 50S subunit. In terms of biological role, one of the proteins that surrounds the polypeptide exit tunnel on the outside of the subunit. The sequence is that of Large ribosomal subunit protein uL24 from Xanthomonas axonopodis pv. citri (strain 306).